A 304-amino-acid polypeptide reads, in one-letter code: UDP-3-O-acyl-N-acetylglucosamine deacetylase (304 aa).

3 residues coordinate Zn(2+): H78, H237, and D241. H264 functions as the Proton donor in the catalytic mechanism.

This sequence belongs to the LpxC family. Requires Zn(2+) as cofactor.

The catalysed reaction is a UDP-3-O-[(3R)-3-hydroxyacyl]-N-acetyl-alpha-D-glucosamine + H2O = a UDP-3-O-[(3R)-3-hydroxyacyl]-alpha-D-glucosamine + acetate. It functions in the pathway glycolipid biosynthesis; lipid IV(A) biosynthesis; lipid IV(A) from (3R)-3-hydroxytetradecanoyl-[acyl-carrier-protein] and UDP-N-acetyl-alpha-D-glucosamine: step 2/6. Functionally, catalyzes the hydrolysis of UDP-3-O-myristoyl-N-acetylglucosamine to form UDP-3-O-myristoylglucosamine and acetate, the committed step in lipid A biosynthesis. The polypeptide is UDP-3-O-acyl-N-acetylglucosamine deacetylase (Methylococcus capsulatus (strain ATCC 33009 / NCIMB 11132 / Bath)).